The primary structure comprises 305 residues: Methionyl-tRNA formyltransferase (305 aa).

Position 109–112 (109–112 (SLLP)) interacts with (6S)-5,6,7,8-tetrahydrofolate.

It belongs to the Fmt family.

The catalysed reaction is L-methionyl-tRNA(fMet) + (6R)-10-formyltetrahydrofolate = N-formyl-L-methionyl-tRNA(fMet) + (6S)-5,6,7,8-tetrahydrofolate + H(+). Attaches a formyl group to the free amino group of methionyl-tRNA(fMet). The formyl group appears to play a dual role in the initiator identity of N-formylmethionyl-tRNA by promoting its recognition by IF2 and preventing the misappropriation of this tRNA by the elongation apparatus. The protein is Methionyl-tRNA formyltransferase of Paramagnetospirillum magneticum (strain ATCC 700264 / AMB-1) (Magnetospirillum magneticum).